A 199-amino-acid polypeptide reads, in one-letter code: Recombination protein RecR (199 aa).

The C4-type zinc finger occupies C58–C73. Positions G81–P176 constitute a Toprim domain.

This sequence belongs to the RecR family.

Its function is as follows. May play a role in DNA repair. It seems to be involved in an RecBC-independent recombinational process of DNA repair. It may act with RecF and RecO. The polypeptide is Recombination protein RecR (Dinoroseobacter shibae (strain DSM 16493 / NCIMB 14021 / DFL 12)).